Consider the following 232-residue polypeptide: E3 ubiquitin-protein ligase RNF125 (232 aa).

A compositionally biased stretch (polar residues) spans 1–10 (MGSVLSSDSG). The segment at 1 to 27 (MGSVLSSDSGKSAPPSATPRALERRGD) is disordered. Gly2 is lipidated: N-myristoyl glycine. 2 residues coordinate Zn(2+): Cys37 and Cys40. An RING-type zinc finger spans residues 37–76 (CAVCLEVLHQPVRTRCGHVFCRSCIATSLKNNKWTCPYCR). Positions 43–45 (VLH) are interaction with the C2HC RNF-type zinc finger. Residues Cys52, His54, Cys57, Cys60, Cys72, Cys75, Cys100, and Cys103 each contribute to the Zn(2+) site. The C2HC RNF-type zinc-finger motif lies at 100–119 (CAECDTLVCLGEMRAHIRTC). Positions 109 to 113 (LGEMR) are interaction with the RING-type zinc finger. Zn(2+) contacts are provided by His115 and Cys119. Positions 120 to 128 (QKYIDKYGP) are linker region. The interval 210–224 (EEALIRRVLDRSLLE) is required for interaction with ubiquitin and for autoubiquitination.

As to quaternary structure, interacts with UBE2D1. Interacts with VCP/p97; leading to recruit RNF125 to RIGI and promote ubiquitination of RIGI. In terms of processing, autoubiquitinated, leading to its subsequent proteasomal degradation.

The protein resides in the golgi apparatus membrane. The enzyme catalyses S-ubiquitinyl-[E2 ubiquitin-conjugating enzyme]-L-cysteine + [acceptor protein]-L-lysine = [E2 ubiquitin-conjugating enzyme]-L-cysteine + N(6)-ubiquitinyl-[acceptor protein]-L-lysine.. It participates in protein modification; protein ubiquitination. E3 ubiquitin-protein ligase that mediates ubiquitination and subsequent proteasomal degradation of target proteins, such as RIGI, MAVS/IPS1, IFIH1/MDA5, JAK1 and p53/TP53. Acts as a negative regulator of type I interferon production by mediating ubiquitination of RIGI at 'Lys-181', leading to RIGI degradation. Mediates ubiquitination and subsequent degradation of p53/TP53. Mediates ubiquitination and subsequent degradation of JAK1. Acts as a positive regulator of T-cell activation. The chain is E3 ubiquitin-protein ligase RNF125 (RNF125) from Macaca fascicularis (Crab-eating macaque).